The chain runs to 644 residues: 1-deoxy-D-xylulose-5-phosphate synthase (644 aa).

Thiamine diphosphate contacts are provided by residues histidine 84 and 125 to 127 (GHS). A Mg(2+)-binding site is contributed by aspartate 156. Thiamine diphosphate-binding positions include 157–158 (GA), asparagine 185, tyrosine 296, and glutamate 378. Asparagine 185 provides a ligand contact to Mg(2+).

This sequence belongs to the transketolase family. DXPS subfamily. Homodimer. The cofactor is Mg(2+). Thiamine diphosphate serves as cofactor.

The catalysed reaction is D-glyceraldehyde 3-phosphate + pyruvate + H(+) = 1-deoxy-D-xylulose 5-phosphate + CO2. It functions in the pathway metabolic intermediate biosynthesis; 1-deoxy-D-xylulose 5-phosphate biosynthesis; 1-deoxy-D-xylulose 5-phosphate from D-glyceraldehyde 3-phosphate and pyruvate: step 1/1. Catalyzes the acyloin condensation reaction between C atoms 2 and 3 of pyruvate and glyceraldehyde 3-phosphate to yield 1-deoxy-D-xylulose-5-phosphate (DXP). The sequence is that of 1-deoxy-D-xylulose-5-phosphate synthase from Paramagnetospirillum magneticum (strain ATCC 700264 / AMB-1) (Magnetospirillum magneticum).